Reading from the N-terminus, the 609-residue chain is Dihydroxy-acid dehydratase (609 aa).

D81 is a binding site for Mg(2+). [2Fe-2S] cluster is bound at residue C122. Mg(2+) is bound by residues D123 and K124. Position 124 is an N6-carboxylysine (K124). A [2Fe-2S] cluster-binding site is contributed by C195. Residue E491 participates in Mg(2+) binding. S517 serves as the catalytic Proton acceptor.

Belongs to the IlvD/Edd family. In terms of assembly, homodimer. [2Fe-2S] cluster serves as cofactor. Mg(2+) is required as a cofactor.

It catalyses the reaction (2R)-2,3-dihydroxy-3-methylbutanoate = 3-methyl-2-oxobutanoate + H2O. The catalysed reaction is (2R,3R)-2,3-dihydroxy-3-methylpentanoate = (S)-3-methyl-2-oxopentanoate + H2O. Its pathway is amino-acid biosynthesis; L-isoleucine biosynthesis; L-isoleucine from 2-oxobutanoate: step 3/4. The protein operates within amino-acid biosynthesis; L-valine biosynthesis; L-valine from pyruvate: step 3/4. Its function is as follows. Functions in the biosynthesis of branched-chain amino acids. Catalyzes the dehydration of (2R,3R)-2,3-dihydroxy-3-methylpentanoate (2,3-dihydroxy-3-methylvalerate) into 2-oxo-3-methylpentanoate (2-oxo-3-methylvalerate) and of (2R)-2,3-dihydroxy-3-methylbutanoate (2,3-dihydroxyisovalerate) into 2-oxo-3-methylbutanoate (2-oxoisovalerate), the penultimate precursor to L-isoleucine and L-valine, respectively. In Acinetobacter baumannii (strain ATCC 17978 / DSM 105126 / CIP 53.77 / LMG 1025 / NCDC KC755 / 5377), this protein is Dihydroxy-acid dehydratase.